The primary structure comprises 105 residues: Large ribosomal subunit protein uL24 (105 aa).

The protein belongs to the universal ribosomal protein uL24 family. Part of the 50S ribosomal subunit.

Its function is as follows. One of two assembly initiator proteins, it binds directly to the 5'-end of the 23S rRNA, where it nucleates assembly of the 50S subunit. One of the proteins that surrounds the polypeptide exit tunnel on the outside of the subunit. The protein is Large ribosomal subunit protein uL24 of Staphylococcus carnosus (strain TM300).